The primary structure comprises 587 residues: Nucleoporin p58/p45 (587 aa).

5 consecutive repeat copies span residues 7–8 (FG), 30–31 (FG), 44–45 (FG), 63–64 (FG), and 68–69 (FG). Residues 7-567 (FGSGTLGSTT…VSNPASAGFG (561 aa)) form a 14 X 2 AA repeats of F-G region. Residues 196 to 236 (TSAASNEGLGGIDFSTSSDKKSDKTGTRPEDSKALKDENLP) are disordered. A compositionally biased stretch (basic and acidic residues) spans 213 to 234 (SDKKSDKTGTRPEDSKALKDEN). Coiled coils occupy residues 244–264 (ENLQ…SRMS) and 302–369 (ETAQ…SHIT). Thr319 bears the Phosphothreonine mark. 9 tandem repeats follow at residues 476-477 (FG), 480-481 (FG), 501-502 (FG), 507-508 (FG), 517-518 (FG), 519-520 (FG), 533-534 (FG), 556-557 (FG), and 566-567 (FG). Positions 565–587 (GFGTGGQLLQLKRPPAGNKRGKR) are disordered.

It belongs to the NUP58 family. Component of the p62 complex, a complex at least composed of NUP62, NUP54, and NUP58. Interacts with NUTF2. Interacts with SRP1-alpha and Importin p97 proteins when they are together, but not with SRP1-alpha protein alone. Post-translationally, O-glycosylated.

The protein resides in the nucleus. It is found in the nuclear pore complex. Its subcellular location is the nucleus membrane. Its function is as follows. Component of the nuclear pore complex, a complex required for the trafficking across the nuclear membrane. This is Nucleoporin p58/p45 from Mus musculus (Mouse).